The primary structure comprises 574 residues: Glucose-6-phosphate 1-dehydrogenase, chloroplastic (574 aa).

NADP(+) contacts are provided by residues 93-100 and Arg-127; that span reads GASGDLAK. Cys-145 and Cys-153 form a disulfide bridge. Residue Lys-230 coordinates NADP(+). Residues Lys-230, 260–264, Glu-298, and Asp-317 contribute to the D-glucose 6-phosphate site; that span reads HYLGK. His-322 functions as the Proton acceptor in the catalytic mechanism. Residue Lys-415 participates in NADP(+) binding. D-glucose 6-phosphate-binding residues include Lys-418 and Lys-423. Residues Arg-424, Arg-428, and Arg-457 each contribute to the NADP(+) site. Gln-459 is a D-glucose 6-phosphate binding site. NADP(+) contacts are provided by residues 465 to 467 and Arg-550; that span reads YLK.

This sequence belongs to the glucose-6-phosphate dehydrogenase family. In terms of assembly, homodimer.

The protein localises to the plastid. It localises to the chloroplast. The catalysed reaction is D-glucose 6-phosphate + NADP(+) = 6-phospho-D-glucono-1,5-lactone + NADPH + H(+). It functions in the pathway carbohydrate degradation; pentose phosphate pathway; D-ribulose 5-phosphate from D-glucose 6-phosphate (oxidative stage): step 1/3. With respect to regulation, regulated by metabolites. Post-translationally inactivated by cysteine-mediated redox modification via the ferredoxin-thioredoxin system in the light and this avoids futile cycles with photosynthetic CO2 fixation. In terms of biological role, catalyzes the rate-limiting step of the oxidative pentose-phosphate pathway, which represents a route for the dissimilation of carbohydrates besides glycolysis. The main function of this enzyme is to provide reducing power (NADPH) and pentose phosphates for fatty acid and nucleic acid synthesis which are involved in membrane synthesis and cell division. The polypeptide is Glucose-6-phosphate 1-dehydrogenase, chloroplastic (G6PD) (Spinacia oleracea (Spinach)).